The sequence spans 673 residues: Pesticin receptor (673 aa).

The first 22 residues, 1–22 (MKMTRLYPLALGGLLLPAIANA), serve as a signal peptide directing secretion. The TonB box motif lies at 30 to 37 (STLEVTAS). Residues 41 to 155 (SRSASANNVS…QGGIINIVTQ (115 aa)) form the TBDR plug domain. Residues 160 to 672 (TPRGYIEGGV…TVGINTRIDF (513 aa)) form the TBDR beta-barrel domain. The TonB C-terminal box signature appears at 657-673 (QVNMGRTVGINTRIDFF).

Belongs to the TonB-dependent receptor family.

It is found in the cell outer membrane. Its function is as follows. Receptor for the bacteriocin pesticin and for the siderophore yersiniabactin. This chain is Pesticin receptor (fyuA), found in Yersinia enterocolitica serotype O:8 / biotype 1B (strain NCTC 13174 / 8081).